The primary structure comprises 84 residues: Mu-conotoxin-like Cal 12.2d (84 aa).

Positions 1–19 (MKLTCVLVVLLLVLPFGDL) are cleaved as a signal peptide. A propeptide spanning residues 20-42 (ITTSNTEDNKRGATPWQNSLKAR) is cleaved from the precursor. A 6'-bromotryptophan modification is found at Trp72. Pro77 is subject to 4-hydroxyproline. Trp81 is modified (6'-bromotryptophan).

It belongs to the conotoxin O1 superfamily. Contains 4 disulfide bonds. Expressed by the venom duct.

The protein resides in the secreted. In terms of biological role, mu-conotoxins block voltage-gated sodium channels. This toxin reversibly blocks voltage-gated sodium channel in cephalopods, with no alteration in the voltage dependence of sodium conductance or on the kinetics of inactivation. This is Mu-conotoxin-like Cal 12.2d from Californiconus californicus (California cone).